Consider the following 119-residue polypeptide: Small ribosomal subunit protein uS10 (119 aa).

The protein belongs to the universal ribosomal protein uS10 family. In terms of assembly, component of the small ribosomal subunit. Mature ribosomes consist of a small (40S) and a large (60S) subunit. The 40S subunit contains about 32 different proteins and 1 molecule of RNA (18S). The 60S subunit contains 45 different proteins and 3 molecules of RNA (25S, 5.8S and 5S).

The protein resides in the cytoplasm. Functionally, component of the ribosome, a large ribonucleoprotein complex responsible for the synthesis of proteins in the cell. The small ribosomal subunit (SSU) binds messenger RNAs (mRNAs) and translates the encoded message by selecting cognate aminoacyl-transfer RNA (tRNA) molecules. The large subunit (LSU) contains the ribosomal catalytic site termed the peptidyl transferase center (PTC), which catalyzes the formation of peptide bonds, thereby polymerizing the amino acids delivered by tRNAs into a polypeptide chain. The nascent polypeptides leave the ribosome through a tunnel in the LSU and interact with protein factors that function in enzymatic processing, targeting, and the membrane insertion of nascent chains at the exit of the ribosomal tunnel. This Candida albicans (strain SC5314 / ATCC MYA-2876) (Yeast) protein is Small ribosomal subunit protein uS10 (RPS20).